A 654-amino-acid polypeptide reads, in one-letter code: Protein SERAC1 (654 aa).

The helical transmembrane segment at 32–54 (NIIRFTGSLIVGGSLFITYEVLA) threads the bilayer.

Belongs to the SERAC1 family. In terms of tissue distribution, testis. Higher expression at both mRNA and protein levels in brain and skeletal muscles, than in other organs.

The protein resides in the mitochondrion membrane. It localises to the endoplasmic reticulum. Its subcellular location is the mitochondrion. Facilitates the transport of serine from the cytosol to the mitochondria by interacting with and stabilizing Sideroflexin-1 (SFXN1), a mitochondrial serine transporter, playing a fundamental role in the one-carbon cycle responsible for the synthesis of nucleotides needed for mitochondrial DNA replication. Plays an important role in the phosphatidylglycerol (PG) remodeling that is essential for both mitochondrial function and intracellular cholesterol trafficking. Specifically involved in the exchange of the sn-1 acyl chain from PG 16:0/18:1(9Z) (also known as 1-hexadecanoyl-2-(9Z-octadecenoyl)-sn-glycero-3-phospho-(1'-sn-glycerol)) to PG 18:0/18:1(9Z) (also known as 1-octadecanoyl-2-(9Z-octadecenoyl)-sn-glycero-3-phospho-(1'-sn-glycerol)), a step needed in the bis(monoacylglycerol)phosphate biosynthetic pathway. May have acyltransferase activity although the mechanism for PG remodeling has not been determined. The protein is Protein SERAC1 (Serac1) of Mus musculus (Mouse).